The sequence spans 332 residues: Decaprenyl-phosphate phosphoribosyltransferase (332 aa).

Residues 1-12 (MSEHAAEHHRDT) are compositionally biased toward basic and acidic residues. Positions 1-36 (MSEHAAEHHRDTQNFLTSEPHTTAIEDNKKRQPPKN) are disordered. The next 2 membrane-spanning stretches (helical) occupy residues 50-70 (WVKN…AIFN) and 74-94 (IIDV…IYLV). 5-phospho-alpha-D-ribose 1-diphosphate is bound by residues K52 and Y92. The Mg(2+) site is built by N95 and D99. K109 serves as a coordination point for 5-phospho-alpha-D-ribose 1-diphosphate. Helical transmembrane passes span 114 to 134 (IAAG…LIAL) and 146 to 166 (VALA…CFGW). The 5-phospho-alpha-D-ribose 1-diphosphate site is built by K167 and R184. A run of 2 helical transmembrane segments spans residues 169–189 (MPVI…MAGG) and 190–210 (VAAG…GSLF). Trans,octa-cis-decaprenyl phosphate is bound at residue K215. The next 3 membrane-spanning stretches (helical) occupy residues 244–264 (FVWT…GFDL), 273–293 (PWYQ…AAGV), and 310–330 (VLQV…YIMP).

This sequence belongs to the UbiA prenyltransferase family. DPPR synthase subfamily. Requires Mg(2+) as cofactor.

The protein resides in the cell inner membrane. The catalysed reaction is trans,octa-cis-decaprenyl phosphate + 5-phospho-alpha-D-ribose 1-diphosphate + H(+) = trans,octa-cis-decaprenylphospho-beta-D-ribofuranose 5-phosphate + diphosphate. It participates in cell wall biogenesis; cell wall polysaccharide biosynthesis. Functionally, involved in the biosynthesis of decaprenylphosphoryl arabinose (DPA) a precursor for arabinan synthesis in mycobacterial cell wall biosynthesis. Catalyzes the transfer of a 5-phosphoribosyl residue from phosphoribose diphosphate (PRPP) to decaprenyl phosphate (DP) to form decaprenylphosphoryl-5-phosphoribose (DPPR). This chain is Decaprenyl-phosphate phosphoribosyltransferase, found in Corynebacterium glutamicum (strain ATCC 13032 / DSM 20300 / JCM 1318 / BCRC 11384 / CCUG 27702 / LMG 3730 / NBRC 12168 / NCIMB 10025 / NRRL B-2784 / 534).